The following is a 287-amino-acid chain: uncharacterized protein (287 aa).

Residues 1 to 31 (MLGSMALKLRKWIWASIPSLALILSSCSALV) form the signal peptide.

The protein belongs to the MG439/MG440 family.

This is an uncharacterized protein from Mycoplasma pneumoniae (strain ATCC 29342 / M129 / Subtype 1) (Mycoplasmoides pneumoniae).